A 129-amino-acid chain; its full sequence is Small ribosomal subunit protein uS11 (129 aa).

Belongs to the universal ribosomal protein uS11 family. In terms of assembly, part of the 30S ribosomal subunit. Interacts with proteins S7 and S18. Binds to IF-3.

Its function is as follows. Located on the platform of the 30S subunit, it bridges several disparate RNA helices of the 16S rRNA. Forms part of the Shine-Dalgarno cleft in the 70S ribosome. This chain is Small ribosomal subunit protein uS11, found in Buchnera aphidicola subsp. Baizongia pistaciae (strain Bp).